Here is a 187-residue protein sequence, read N- to C-terminus: tRNA (cytidine(56)-2'-O)-methyltransferase (187 aa).

S-adenosyl-L-methionine contacts are provided by residues leucine 94 and 120–124; that span reads GAEKV.

The protein belongs to the aTrm56 family. As to quaternary structure, homodimer.

It is found in the cytoplasm. It catalyses the reaction cytidine(56) in tRNA + S-adenosyl-L-methionine = 2'-O-methylcytidine(56) in tRNA + S-adenosyl-L-homocysteine + H(+). Specifically catalyzes the AdoMet-dependent 2'-O-ribose methylation of cytidine at position 56 in tRNAs. The sequence is that of tRNA (cytidine(56)-2'-O)-methyltransferase from Hyperthermus butylicus (strain DSM 5456 / JCM 9403 / PLM1-5).